The primary structure comprises 566 residues: uncharacterized protein (566 aa).

This is an uncharacterized protein from Escherichia coli (strain K12).